We begin with the raw amino-acid sequence, 136 residues long: Transmembrane protein 203 (136 aa).

The segment at 1 to 51 (MLFSLRELVQWLGFATFEIFVHLLALLVFSVLLALRVDGLVPGLSWWNVFV) is interaction with STING1. The next 4 helical transmembrane spans lie at 14–34 (FATF…VLLA), 50–72 (FVPF…VRLF), 81–101 (VLRL…EMLL), and 112–132 (LWFG…MIRA). Positions 52–136 (PFFAADGLST…LLMIRACRVN (85 aa)) are required for the lysosomal localization of the STING-TMEM203 complex.

As to quaternary structure, homodimer. Interacts with ATP2A2, ITPR3 and STIM1. Interacts with STING1 (via transmembrane domain). Increased expression seen in T-lymphocytes from patients with systemic lupus erythematosus (SLE).

It localises to the endoplasmic reticulum membrane. Its subcellular location is the endoplasmic reticulum-Golgi intermediate compartment. It is found in the lysosome membrane. Its function is as follows. Involved in the regulation of cellular calcium homeotasis. Required for spermatogenesis. Acts as a regulator of STING-mediated inflammatory signaling in macrophages. Forms a complex with STING, promoting the activity of TBK1 kinase and the transcription factor IRF3, leading to activation of type I interferon expression. The chain is Transmembrane protein 203 (TMEM203) from Homo sapiens (Human).